The chain runs to 123 residues: MVMITLINNIIRLINSYNSGKNICICIYSKISMLLLGILIEKKIIKSFFVLLFKNKKKIFVIIKTIILIKLFSKPSNKRYIKNKYLKKIEFNNGLIISTNIGLLTIRECLKLKIGGKIFFSII.

Belongs to the universal ribosomal protein uS8 family. As to quaternary structure, part of the 30S ribosomal subunit. Contacts proteins S5 and S12.

In terms of biological role, one of the primary rRNA binding proteins, it binds directly to 16S rRNA central domain where it helps coordinate assembly of the platform of the 30S subunit. The protein is Small ribosomal subunit protein uS8 (rpsH) of Carsonella ruddii (strain PV).